A 209-amino-acid polypeptide reads, in one-letter code: NAD(P)H dehydrogenase (quinone) (209 aa).

Residues 4–199 form the Flavodoxin-like domain; that stretch reads VNIIFHSVHA…EMARYQGRHV (196 aa). FMN-binding positions include 10–15 and 87–89; these read SVHAHI and TRY. Substrate is bound at residue tryptophan 107. FMN is bound by residues 122 to 128 and histidine 143; that span reads SSGTQHG.

The protein belongs to the WrbA family. The cofactor is FMN.

It catalyses the reaction a quinone + NADH + H(+) = a quinol + NAD(+). It carries out the reaction a quinone + NADPH + H(+) = a quinol + NADP(+). The protein is NAD(P)H dehydrogenase (quinone) of Methanosarcina mazei (strain ATCC BAA-159 / DSM 3647 / Goe1 / Go1 / JCM 11833 / OCM 88) (Methanosarcina frisia).